The chain runs to 89 residues: Large ribosomal subunit protein bL28 (89 aa).

Belongs to the bacterial ribosomal protein bL28 family.

The chain is Large ribosomal subunit protein bL28 from Chlamydia muridarum (strain MoPn / Nigg).